The primary structure comprises 375 residues: Coproporphyrin III ferrochelatase (375 aa).

Fe-coproporphyrin III-binding residues include serine 59 and tyrosine 128. Fe(2+) contacts are provided by histidine 191 and glutamate 286.

Belongs to the ferrochelatase family.

It is found in the cytoplasm. It catalyses the reaction Fe-coproporphyrin III + 2 H(+) = coproporphyrin III + Fe(2+). Its pathway is porphyrin-containing compound metabolism; protoheme biosynthesis. In terms of biological role, involved in coproporphyrin-dependent heme b biosynthesis. Catalyzes the insertion of ferrous iron into coproporphyrin III to form Fe-coproporphyrin III. This is Coproporphyrin III ferrochelatase from Streptomyces coelicolor (strain ATCC BAA-471 / A3(2) / M145).